We begin with the raw amino-acid sequence, 186 residues long: Two-component response regulator ARR6 (186 aa).

The region spanning 26–153 (HVLAVDDSHV…DVKRLRDSLM (128 aa)) is the Response regulatory domain. A 4-aspartylphosphate modification is found at D86.

It belongs to the ARR family. Type-A subfamily. In terms of processing, two-component system major event consists of a His-to-Asp phosphorelay between a sensor histidine kinase (HK) and a response regulator (RR). In plants, the His-to-Asp phosphorelay involves an additional intermediate named Histidine-containing phosphotransfer protein (HPt). This multistep phosphorelay consists of a His-Asp-His-Asp sequential transfer of a phosphate group between first a His and an Asp of the HK protein, followed by the transfer to a conserved His of the HPt protein and finally the transfer to an Asp in the receiver domain of the RR protein. Predominantly expressed in roots.

The protein localises to the nucleus. Its function is as follows. Functions as a response regulator involved in His-to-Asp phosphorelay signal transduction system. Phosphorylation of the Asp residue in the receiver domain activates the ability of the protein to promote the transcription of target genes. Type-A response regulators seem to act as negative regulators of the cytokinin signaling. The protein is Two-component response regulator ARR6 (ARR6) of Arabidopsis thaliana (Mouse-ear cress).